Reading from the N-terminus, the 498-residue chain is WD repeat-containing protein 55 homolog (498 aa).

Positions 1–131 (MHTHNNFKTP…ATFDLDEDDE (131 aa)) are disordered. Acidic residues-rich tracts occupy residues 12-23 (DEDELDDLDEDM) and 31-48 (IEQE…EYDL). 6 WD repeats span residues 154 to 193 (KLED…NKLL), 198 to 237 (VHSK…LKKL), 241 to 279 (AHDD…AIFE), 282 to 321 (ELED…MYVQ), 324 to 363 (PYEE…YHCD), and 408 to 447 (QHNM…DFGE).

It belongs to the WD repeat WDR55 family.

The chain is WD repeat-containing protein 55 homolog from Drosophila simulans (Fruit fly).